The following is a 185-amino-acid chain: ATP synthase subunit b, cyanelle (185 aa).

The helical transmembrane segment at 36–58 (LINLLVIFFLLIYQGRPFFTALL) threads the bilayer.

This sequence belongs to the ATPase B chain family. F-type ATPases have 2 components, F(1) - the catalytic core - and F(0) - the membrane proton channel. F(1) has five subunits: alpha(3), beta(3), gamma(1), delta(1), epsilon(1). F(0) has four main subunits: a(1), b(1), b'(1) and c(10-14). The alpha and beta chains form an alternating ring which encloses part of the gamma chain. F(1) is attached to F(0) by a central stalk formed by the gamma and epsilon chains, while a peripheral stalk is formed by the delta, b and b' chains.

The protein localises to the plastid. The protein resides in the cyanelle thylakoid membrane. F(1)F(0) ATP synthase produces ATP from ADP in the presence of a proton or sodium gradient. F-type ATPases consist of two structural domains, F(1) containing the extramembraneous catalytic core and F(0) containing the membrane proton channel, linked together by a central stalk and a peripheral stalk. During catalysis, ATP synthesis in the catalytic domain of F(1) is coupled via a rotary mechanism of the central stalk subunits to proton translocation. Functionally, component of the F(0) channel, it forms part of the peripheral stalk, linking F(1) to F(0). The chain is ATP synthase subunit b, cyanelle from Cyanophora paradoxa.